The sequence spans 130 residues: Small ribosomal subunit protein uS9 (130 aa).

It belongs to the universal ribosomal protein uS9 family.

This is Small ribosomal subunit protein uS9 from Pseudomonas fluorescens (strain ATCC BAA-477 / NRRL B-23932 / Pf-5).